The sequence spans 402 residues: BTB and MATH domain-containing protein 40 (402 aa).

A disordered region spans residues 1-25 (MSDRHLYGSDHSYLSSKPSCSSCRR). Over residues 15-25 (SSKPSCSSCRR) the composition is skewed to low complexity. Positions 43–177 (VLTQRWTVCN…DKSLVISCHI (135 aa)) constitute an MATH domain. A BTB domain is found at 222-295 (TDMTIVAGPL…IYAGVIKSDI (74 aa)).

As to quaternary structure, interacts with cul-3.

Its pathway is protein modification; protein ubiquitination. In terms of biological role, probable substrate-specific adapter of an E3 ubiquitin-protein ligase complex which mediates the ubiquitination and subsequent proteasomal degradation of target proteins. This Caenorhabditis elegans protein is BTB and MATH domain-containing protein 40 (bath-40).